We begin with the raw amino-acid sequence, 534 residues long: Neryl diphosphate diphosphatase, chloroplastic (534 aa).

Mg(2+) contacts are provided by Asp-272, Asp-276, Asp-416, and Glu-424. A DDXXD motif motif is present at residues 272–276; the sequence is DDIFD.

This sequence belongs to the terpene synthase family. It depends on Mg(2+) as a cofactor.

The protein resides in the plastid. It localises to the chloroplast. It carries out the reaction neryl diphosphate + H2O = nerol + diphosphate. It functions in the pathway secondary metabolite biosynthesis; terpenoid biosynthesis. Monoterpene synthase that catalyzes the hydrolysis of neryl diphosphate (NPP) to form nerol and diphosphate. Is specific for NPP and has no hydrolase activity toward geranyl diphosphate (GPP) or farnesyl diphosphate (FPP). The monoterpene nerol may have an insect repellent effect for the plant leaves. The protein is Neryl diphosphate diphosphatase, chloroplastic of Glycine max (Soybean).